Here is a 321-residue protein sequence, read N- to C-terminus: MISIALEHVLTHISFSIISIVISVHLIKFLVPEIIGLCDSLEKGIITTSFCITGLLIIRWVYSRHLPLSNLYESLMFLSWGFSTIHIFSKIWNHQNDLSTITATGAIYCQAFATSGILNEMHQSAILVPALQSQWLMMHVSMMLLSYGALLCGSLLSVSLLVITFRKNIEILEKMNQFSFLIESFLLSEVRPLKKKKSFLQNISFLSFKNYHKYQFTQQLDHWSYRIINLGFTLLTIGILSGAVWANEAWGSYWNWDPKETWAFITWTIFATYLHTRTNQRMPGMHSAIVASIGFLIIWICYFGVNLLGIGLHSYGAFTSN.

Helical transmembrane passes span 17–37 (IISIVISVHLIKFLVPEIIGL), 41–61 (LEKGIITTSFCITGLLIIRWV), 68–88 (LSNLYESLMFLSWGFSTIHIF), 143–163 (MLLSYGALLCGSLLSVSLLVI), 227–247 (IINLGFTLLTIGILSGAVWAN), 260–277 (ETWAFITWTIFATYLHTR), and 288–308 (AIVASIGFLIIWICYFGVNLL).

It belongs to the CcmF/CycK/Ccl1/NrfE/CcsA family. In terms of assembly, may interact with Ccs1.

The protein localises to the plastid. The protein resides in the chloroplast thylakoid membrane. In terms of biological role, required during biogenesis of c-type cytochromes (cytochrome c6 and cytochrome f) at the step of heme attachment. The protein is Cytochrome c biogenesis protein CcsA of Piper cenocladum (Ant piper).